The sequence spans 206 residues: Small ribosomal subunit protein uS4 (206 aa).

The disordered stretch occupies residues 29–52; the sequence is LDKRPYAPGQHGQRRGRGRPSDYS. Residues 96 to 171 form the S4 RNA-binding domain; the sequence is RRLDNVVFRM…QKRRRVSPWV (76 aa).

Belongs to the universal ribosomal protein uS4 family. In terms of assembly, part of the 30S ribosomal subunit. Contacts protein S5. The interaction surface between S4 and S5 is involved in control of translational fidelity.

One of the primary rRNA binding proteins, it binds directly to 16S rRNA where it nucleates assembly of the body of the 30S subunit. Functionally, with S5 and S12 plays an important role in translational accuracy. The chain is Small ribosomal subunit protein uS4 from Deinococcus deserti (strain DSM 17065 / CIP 109153 / LMG 22923 / VCD115).